Here is a 1066-residue protein sequence, read N- to C-terminus: Beta-galactosidase (1066 aa).

Asn-110 and Asp-209 together coordinate substrate. A Na(+)-binding site is contributed by Asp-209. Glu-432, His-434, and Glu-477 together coordinate Mg(2+). Substrate-binding positions include Glu-477 and 553-556 (EYAH). The active-site Proton donor is the Glu-477. The Nucleophile role is filled by Glu-553. Residue Asn-613 coordinates Mg(2+). Residues Phe-617 and Asn-620 each coordinate Na(+). 2 residues coordinate substrate: Asn-620 and Trp-1041.

The protein belongs to the glycosyl hydrolase 2 family. In terms of assembly, homotetramer. Requires Mg(2+) as cofactor. It depends on Na(+) as a cofactor.

The catalysed reaction is Hydrolysis of terminal non-reducing beta-D-galactose residues in beta-D-galactosides.. The chain is Beta-galactosidase from Yersinia pseudotuberculosis serotype IB (strain PB1/+).